The following is a 290-amino-acid chain: 33 kDa chaperonin (290 aa).

Cystine bridges form between C235–C237 and C268–C271.

This sequence belongs to the HSP33 family. Under oxidizing conditions two disulfide bonds are formed involving the reactive cysteines. Under reducing conditions zinc is bound to the reactive cysteines and the protein is inactive.

The protein localises to the cytoplasm. In terms of biological role, redox regulated molecular chaperone. Protects both thermally unfolding and oxidatively damaged proteins from irreversible aggregation. Plays an important role in the bacterial defense system toward oxidative stress. The protein is 33 kDa chaperonin of Streptococcus equi subsp. zooepidemicus (strain H70).